A 246-amino-acid polypeptide reads, in one-letter code: 1-(5-phosphoribosyl)-5-[(5-phosphoribosylamino)methylideneamino] imidazole-4-carboxamide isomerase (246 aa).

Catalysis depends on Asp7, which acts as the Proton acceptor. The active-site Proton donor is Asp129.

The protein belongs to the HisA/HisF family.

It localises to the cytoplasm. The catalysed reaction is 1-(5-phospho-beta-D-ribosyl)-5-[(5-phospho-beta-D-ribosylamino)methylideneamino]imidazole-4-carboxamide = 5-[(5-phospho-1-deoxy-D-ribulos-1-ylimino)methylamino]-1-(5-phospho-beta-D-ribosyl)imidazole-4-carboxamide. It functions in the pathway amino-acid biosynthesis; L-histidine biosynthesis; L-histidine from 5-phospho-alpha-D-ribose 1-diphosphate: step 4/9. This chain is 1-(5-phosphoribosyl)-5-[(5-phosphoribosylamino)methylideneamino] imidazole-4-carboxamide isomerase, found in Buchnera aphidicola subsp. Acyrthosiphon pisum (strain Tuc7).